Consider the following 62-residue polypeptide: MAQSTRLGNLIKSLPGYAPGKVVPGWGTTPVMAGIGFMLLIFLVTILQIYNQSLLLQSISFE.

A helical transmembrane segment spans residues 30-50; the sequence is PVMAGIGFMLLIFLVTILQIY.

Belongs to the PsbH family. PSII is composed of 1 copy each of membrane proteins PsbA, PsbB, PsbC, PsbD, PsbE, PsbF, PsbH, PsbI, PsbJ, PsbK, PsbL, PsbM, PsbT, PsbX, PsbY, Psb30/Ycf12, peripheral proteins PsbO, CyanoQ (PsbQ), PsbU, PsbV and a large number of cofactors. It forms dimeric complexes.

The protein resides in the cellular thylakoid membrane. One of the components of the core complex of photosystem II (PSII), required for its stability and/or assembly. PSII is a light-driven water:plastoquinone oxidoreductase that uses light energy to abstract electrons from H(2)O, generating O(2) and a proton gradient subsequently used for ATP formation. It consists of a core antenna complex that captures photons, and an electron transfer chain that converts photonic excitation into a charge separation. This chain is Photosystem II reaction center protein H, found in Prochlorococcus marinus (strain MIT 9303).